An 83-amino-acid chain; its full sequence is Small ribosomal subunit protein uS17 (83 aa).

This sequence belongs to the universal ribosomal protein uS17 family. In terms of assembly, part of the 30S ribosomal subunit.

One of the primary rRNA binding proteins, it binds specifically to the 5'-end of 16S ribosomal RNA. The chain is Small ribosomal subunit protein uS17 from Francisella philomiragia subsp. philomiragia (strain ATCC 25017 / CCUG 19701 / FSC 153 / O#319-036).